Reading from the N-terminus, the 1109-residue chain is DNA mismatch repair protein MSH7 (1109 aa).

2 disordered regions span residues 19 to 45 and 61 to 86; these read TKGL…KEGD and DEVR…KPAE. The span at 61–74 shows a compositional bias: basic and acidic residues; the sequence is DEVRGTDTPPEKVP. 853-860 contributes to the ATP binding site; the sequence is GPNMGGKS.

It belongs to the DNA mismatch repair MutS family. In terms of assembly, heterodimer consisting of MSH2-MSH7 (MutS gamma).

The protein localises to the nucleus. Functionally, component of the post-replicative DNA mismatch repair system (MMR). Forms the heterodimer MutS gamma (MSH2-MSH7 heterodimer) which binds to DNA mismatches thereby initiating DNA repair. MutS gamma recognizes specifically the T/G single base mismatch, but not trinucleotide insertion-deletion loops (IDL). This Arabidopsis thaliana (Mouse-ear cress) protein is DNA mismatch repair protein MSH7 (MSH7).